The primary structure comprises 122 residues: Small ribosomal subunit protein uS13 (122 aa).

The disordered stretch occupies residues 93 to 122 (RLSLPVRGQRTKTNSRTRKGKRKTVAGKKK). Residues 101 to 122 (QRTKTNSRTRKGKRKTVAGKKK) are compositionally biased toward basic residues.

The protein belongs to the universal ribosomal protein uS13 family. In terms of assembly, part of the 30S ribosomal subunit. Forms a loose heterodimer with protein S19. Forms two bridges to the 50S subunit in the 70S ribosome.

Functionally, located at the top of the head of the 30S subunit, it contacts several helices of the 16S rRNA. In the 70S ribosome it contacts the 23S rRNA (bridge B1a) and protein L5 of the 50S subunit (bridge B1b), connecting the 2 subunits; these bridges are implicated in subunit movement. Contacts the tRNAs in the A and P-sites. This chain is Small ribosomal subunit protein uS13, found in Chlamydia pneumoniae (Chlamydophila pneumoniae).